A 354-amino-acid chain; its full sequence is Uroporphyrinogen decarboxylase (354 aa).

Substrate-binding positions include 27–31 (RRAGR), F46, D77, Y154, T209, and H327.

It belongs to the uroporphyrinogen decarboxylase family. As to quaternary structure, homodimer.

It localises to the cytoplasm. The catalysed reaction is uroporphyrinogen III + 4 H(+) = coproporphyrinogen III + 4 CO2. It functions in the pathway porphyrin-containing compound metabolism; protoporphyrin-IX biosynthesis; coproporphyrinogen-III from 5-aminolevulinate: step 4/4. Catalyzes the decarboxylation of four acetate groups of uroporphyrinogen-III to yield coproporphyrinogen-III. In Salmonella typhimurium (strain LT2 / SGSC1412 / ATCC 700720), this protein is Uroporphyrinogen decarboxylase.